Here is a 1079-residue protein sequence, read N- to C-terminus: Isoleucine--tRNA ligase (1079 aa).

Residues 53–63 (PFANGLPHYGH) carry the 'HIGH' region motif. Positions 611–615 (KLSKR) match the 'KMSKS' region motif. Lys614 lines the ATP pocket.

Belongs to the class-I aminoacyl-tRNA synthetase family. IleS type 2 subfamily. In terms of assembly, monomer. Requires Zn(2+) as cofactor.

It localises to the cytoplasm. It carries out the reaction tRNA(Ile) + L-isoleucine + ATP = L-isoleucyl-tRNA(Ile) + AMP + diphosphate. Its function is as follows. Catalyzes the attachment of isoleucine to tRNA(Ile). As IleRS can inadvertently accommodate and process structurally similar amino acids such as valine, to avoid such errors it has two additional distinct tRNA(Ile)-dependent editing activities. One activity is designated as 'pretransfer' editing and involves the hydrolysis of activated Val-AMP. The other activity is designated 'posttransfer' editing and involves deacylation of mischarged Val-tRNA(Ile). This Rickettsia canadensis (strain McKiel) protein is Isoleucine--tRNA ligase.